The chain runs to 154 residues: MNFEGKLIGKDLKVAIVVSRFNDFITGRLLEGAKDTLIRHDVNEDNIDVAFVPGAFEIPLVAKKLASSGNYDAVITLGCVIRGATSHYDYVCNEVAKGVSKVNDQTNVPVIFGILTTESIEQAVERAGTKAGNKGAEAAVSAIEMANLLKSIKA.

5-amino-6-(D-ribitylamino)uracil-binding positions include F21, A55 to E57, and C79 to I81. A84 to T85 serves as a coordination point for (2S)-2-hydroxy-3-oxobutyl phosphate. The active-site Proton donor is the H87. F112 contacts 5-amino-6-(D-ribitylamino)uracil. R126 contributes to the (2S)-2-hydroxy-3-oxobutyl phosphate binding site.

The protein belongs to the DMRL synthase family. As to quaternary structure, forms an icosahedral capsid composed of 60 subunits, arranged as a dodecamer of pentamers.

The catalysed reaction is (2S)-2-hydroxy-3-oxobutyl phosphate + 5-amino-6-(D-ribitylamino)uracil = 6,7-dimethyl-8-(1-D-ribityl)lumazine + phosphate + 2 H2O + H(+). The protein operates within cofactor biosynthesis; riboflavin biosynthesis; riboflavin from 2-hydroxy-3-oxobutyl phosphate and 5-amino-6-(D-ribitylamino)uracil: step 1/2. Catalyzes the formation of 6,7-dimethyl-8-ribityllumazine by condensation of 5-amino-6-(D-ribitylamino)uracil with 3,4-dihydroxy-2-butanone 4-phosphate. This is the penultimate step in the biosynthesis of riboflavin. This is 6,7-dimethyl-8-ribityllumazine synthase from Staphylococcus aureus (strain Newman).